The sequence spans 55 residues: Small ribosomal subunit protein uS14 (55 aa).

Positions 1 to 20 are disordered; the sequence is MSFEPSGPHSHRKPFGKGSR. Cys22, Cys25, Cys38, and Cys41 together coordinate Zn(2+).

It belongs to the universal ribosomal protein uS14 family. Zn(2+) is required as a cofactor.

The polypeptide is Small ribosomal subunit protein uS14 (RPS29) (Encephalitozoon cuniculi (strain GB-M1) (Microsporidian parasite)).